A 274-amino-acid chain; its full sequence is Probable cyclic nucleotide phosphodiesterase RPA0124 (274 aa).

Fe cation is bound by residues Asp-8, His-10, Asp-49, Asn-79, His-155, His-194, and His-196. Residues His-10, Asp-49, and 79 to 80 (NH) each bind AMP. AMP is bound at residue His-196.

The protein belongs to the cyclic nucleotide phosphodiesterase class-III family. Fe(2+) is required as a cofactor.

The polypeptide is Probable cyclic nucleotide phosphodiesterase RPA0124 (Rhodopseudomonas palustris (strain ATCC BAA-98 / CGA009)).